Reading from the N-terminus, the 160-residue chain is SsrA-binding protein (160 aa).

Belongs to the SmpB family.

The protein resides in the cytoplasm. Functionally, required for rescue of stalled ribosomes mediated by trans-translation. Binds to transfer-messenger RNA (tmRNA), required for stable association of tmRNA with ribosomes. tmRNA and SmpB together mimic tRNA shape, replacing the anticodon stem-loop with SmpB. tmRNA is encoded by the ssrA gene; the 2 termini fold to resemble tRNA(Ala) and it encodes a 'tag peptide', a short internal open reading frame. During trans-translation Ala-aminoacylated tmRNA acts like a tRNA, entering the A-site of stalled ribosomes, displacing the stalled mRNA. The ribosome then switches to translate the ORF on the tmRNA; the nascent peptide is terminated with the 'tag peptide' encoded by the tmRNA and targeted for degradation. The ribosome is freed to recommence translation, which seems to be the essential function of trans-translation. This Yersinia enterocolitica serotype O:8 / biotype 1B (strain NCTC 13174 / 8081) protein is SsrA-binding protein.